The chain runs to 413 residues: NADH:flavin oxidoreductase FG08077 (413 aa).

53 to 56 (APLC) is an FMN binding site. Tyr58 serves as a coordination point for substrate. FMN is bound by residues Ala88 and Gln130. 211–214 (HAAH) provides a ligand contact to substrate. Residues Arg264 and 370 to 371 (GR) each bind FMN.

The protein belongs to the NADH:flavin oxidoreductase/NADH oxidase family. NamA subfamily. It depends on FMN as a cofactor.

The protein operates within mycotoxin biosynthesis. In terms of biological role, NADH:flavin oxidoreductase; part of the gene cluster that mediates the biosynthesis of butenolide, a mycotoxin that shows antibiotic activity but does not seem to play a major role in the spread of head blight in wheat. Butenolide is derived from glutamic acid via a 4-acetamido-2-butenoic acid intermediate. The predicted function of the NADH:flavin oxidoreductase FG08077, the cytochrome P450 monooxygenase FG08079, the decarboxylase FG08083, and the putative acetyltransferase FG08082 are consistent with this pathway, however, the respective activities of the butelonide biosynthesis cluster enzymes have still to be experimentally determined. This Gibberella zeae (strain ATCC MYA-4620 / CBS 123657 / FGSC 9075 / NRRL 31084 / PH-1) (Wheat head blight fungus) protein is NADH:flavin oxidoreductase FG08077.